Reading from the N-terminus, the 396-residue chain is Elongation factor Tu (396 aa).

The region spanning K11 to E205 is the tr-type G domain. The interval G20 to T27 is G1. Residue G20–T27 participates in GTP binding. Residue T27 coordinates Mg(2+). Residues G61 to N65 are G2. The G3 stretch occupies residues D82 to G85. GTP-binding positions include D82 to H86 and N137 to D140. Residues N137–D140 form a G4 region. Positions S175–L177 are G5.

Belongs to the TRAFAC class translation factor GTPase superfamily. Classic translation factor GTPase family. EF-Tu/EF-1A subfamily. Monomer.

The protein localises to the cytoplasm. The enzyme catalyses GTP + H2O = GDP + phosphate + H(+). Its function is as follows. GTP hydrolase that promotes the GTP-dependent binding of aminoacyl-tRNA to the A-site of ribosomes during protein biosynthesis. In Lactobacillus acidophilus (strain ATCC 700396 / NCK56 / N2 / NCFM), this protein is Elongation factor Tu.